The following is a 476-amino-acid chain: uncharacterized protein (476 aa).

Positions 1–24 are cleaved as a signal peptide; it reads MIRKSATGVIVALAVIWGGGTWYT.

The protein to E.coli YdgA and H.influenzae HI_1236.

This is an uncharacterized protein from Escherichia coli (strain K12).